We begin with the raw amino-acid sequence, 164 residues long: UPF0178 protein BRADO3147 (164 aa).

Belongs to the UPF0178 family.

In Bradyrhizobium sp. (strain ORS 278), this protein is UPF0178 protein BRADO3147.